Here is an 828-residue protein sequence, read N- to C-terminus: Periplasmic nitrate reductase (828 aa).

Positions 1–31 (MKLSRRHFMKANAVAAAAAVAGITIPIAVRA) form a signal peptide, tat-type signal. Residues 39–95 (IHWDKAPCRFCGVGCGVLVGTQNGRIVASQGDPDAPVNRGLNCIKGYFLPKIMYGQD) enclose the 4Fe-4S Mo/W bis-MGD-type domain. The [4Fe-4S] cluster site is built by Cys-46, Cys-49, Cys-53, and Cys-81. Mo-bis(molybdopterin guanine dinucleotide)-binding positions include Lys-83, Gln-150, Asn-175, Cys-179, 212 to 219 (WGSNMAEM), 243 to 247 (STYQH), 262 to 264 (QTD), Met-372, Gln-376, Asn-482, 508 to 509 (SD), Lys-531, Asp-558, and 718 to 727 (TGRVLEHWHT). Phe-794 provides a ligand contact to substrate. Mo-bis(molybdopterin guanine dinucleotide) contacts are provided by Asn-802 and Lys-819.

This sequence belongs to the prokaryotic molybdopterin-containing oxidoreductase family. NasA/NapA/NarB subfamily. Component of the periplasmic nitrate reductase NapAB complex composed of NapA and NapB. It depends on [4Fe-4S] cluster as a cofactor. The cofactor is Mo-bis(molybdopterin guanine dinucleotide). Predicted to be exported by the Tat system. The position of the signal peptide cleavage has not been experimentally proven.

It localises to the periplasm. The enzyme catalyses 2 Fe(II)-[cytochrome] + nitrate + 2 H(+) = 2 Fe(III)-[cytochrome] + nitrite + H2O. Its function is as follows. Catalytic subunit of the periplasmic nitrate reductase complex NapAB. Receives electrons from NapB and catalyzes the reduction of nitrate to nitrite. The chain is Periplasmic nitrate reductase from Pectobacterium carotovorum subsp. carotovorum (strain PC1).